Consider the following 544-residue polypeptide: Protein angel homolog 2 (544 aa).

It belongs to the CCR4/nocturin family.

This chain is Protein angel homolog 2 (ANGEL2), found in Homo sapiens (Human).